Here is a 374-residue protein sequence, read N- to C-terminus: Fanconi anemia group F protein (374 aa).

Belongs to the multisubunit FA complex composed of FANCA, FANCB, FANCC, FANCE, FANCF, FANCG, FANCL/PHF9 and FANCM. The complex is not found in FA patients. In complex with FANCA, FANCG and FANCL, but not with FANCC, nor FANCE, interacts with HES1; this interaction may be essential for the stability and nuclear localization of FA core complex proteins.

It localises to the nucleus. Functionally, DNA repair protein that may operate in a postreplication repair or a cell cycle checkpoint function. May be implicated in interstrand DNA cross-link repair and in the maintenance of normal chromosome stability. The protein is Fanconi anemia group F protein (FANCF) of Homo sapiens (Human).